Consider the following 275-residue polypeptide: Large ribosomal subunit protein uL2 (275 aa).

Disordered stretches follow at residues 28-54 (APHAPLLEKKSKSGGRNNNGRITTRHI) and 223-275 (VAMN…RNKK).

This sequence belongs to the universal ribosomal protein uL2 family. Part of the 50S ribosomal subunit. Forms a bridge to the 30S subunit in the 70S ribosome.

Functionally, one of the primary rRNA binding proteins. Required for association of the 30S and 50S subunits to form the 70S ribosome, for tRNA binding and peptide bond formation. It has been suggested to have peptidyltransferase activity; this is somewhat controversial. Makes several contacts with the 16S rRNA in the 70S ribosome. This Saccharophagus degradans (strain 2-40 / ATCC 43961 / DSM 17024) protein is Large ribosomal subunit protein uL2.